Here is an 84-residue protein sequence, read N- to C-terminus: uncharacterized protein (84 aa).

This is an uncharacterized protein from Methanocaldococcus jannaschii (strain ATCC 43067 / DSM 2661 / JAL-1 / JCM 10045 / NBRC 100440) (Methanococcus jannaschii).